The chain runs to 446 residues: Glucose-6-phosphate isomerase (446 aa).

The active-site Proton donor is Glu288. Active-site residues include His309 and Lys423.

This sequence belongs to the GPI family.

It localises to the cytoplasm. The catalysed reaction is alpha-D-glucose 6-phosphate = beta-D-fructose 6-phosphate. The protein operates within carbohydrate biosynthesis; gluconeogenesis. Its pathway is carbohydrate degradation; glycolysis; D-glyceraldehyde 3-phosphate and glycerone phosphate from D-glucose: step 2/4. In terms of biological role, catalyzes the reversible isomerization of glucose-6-phosphate to fructose-6-phosphate. This chain is Glucose-6-phosphate isomerase, found in Lacticaseibacillus casei (strain BL23) (Lactobacillus casei).